We begin with the raw amino-acid sequence, 63 residues long: Large ribosomal subunit protein uL29 (63 aa).

Belongs to the universal ribosomal protein uL29 family.

This is Large ribosomal subunit protein uL29 from Aliivibrio fischeri (strain ATCC 700601 / ES114) (Vibrio fischeri).